A 124-amino-acid polypeptide reads, in one-letter code: Glucagon-1 (124 aa).

Positions 1–25 (MKRIHSLAGILLVLGLIQSSCRVLM) are cleaved as a signal peptide. The disordered stretch occupies residues 28 to 54 (ADPSSSLEADSTLKDEPRELSNMKRHS). Basic and acidic residues predominate over residues 38–54 (STLKDEPRELSNMKRHS). A propeptide spanning residues 84–88 (SGVAE) is cleaved from the precursor.

Belongs to the glucagon family.

The protein resides in the secreted. Its function is as follows. Glucagon plays a key role in glucose metabolism and homeostasis. Regulates blood glucose by increasing gluconeogenesis and decreasing glycolysis. The polypeptide is Glucagon-1 (gcg1) (Lophius americanus (American angler)).